Consider the following 564-residue polypeptide: Septation ring formation regulator EzrA (564 aa).

At 1–4 (MVLF) the chain is on the extracellular side. The helical transmembrane segment at 5–23 (IILAILVVILIAIGVLFYM) threads the bilayer. Topologically, residues 24-564 (RSNKRNLIEK…KHIEEQVIKE (541 aa)) are cytoplasmic. Coiled-coil stretches lie at residues 84–126 (VEEK…HQVT), 165–223 (EAAE…LIRE), 271–303 (MISR…YEVK), and 350–435 (VRQF…RRLL).

The protein belongs to the EzrA family.

The protein resides in the cell membrane. Functionally, negative regulator of FtsZ ring formation; modulates the frequency and position of FtsZ ring formation. Inhibits FtsZ ring formation at polar sites. Interacts either with FtsZ or with one of its binding partners to promote depolymerization. The protein is Septation ring formation regulator EzrA of Staphylococcus epidermidis (strain ATCC 35984 / DSM 28319 / BCRC 17069 / CCUG 31568 / BM 3577 / RP62A).